A 206-amino-acid chain; its full sequence is Thymidylate kinase (206 aa).

11–18 (GIDGAGKT) contributes to the ATP binding site.

It belongs to the thymidylate kinase family.

It catalyses the reaction dTMP + ATP = dTDP + ADP. Functionally, phosphorylation of dTMP to form dTDP in both de novo and salvage pathways of dTTP synthesis. This Burkholderia ambifaria (strain MC40-6) protein is Thymidylate kinase.